Reading from the N-terminus, the 594-residue chain is Glutamate decarboxylase 1 (594 aa).

Over residues methionine 1–serine 13 the composition is skewed to low complexity. The segment at methionine 1–alanine 22 is disordered. Residue serine 78 is modified to Phosphoserine. Residue glutamine 190–serine 192 participates in 4-aminobutanoate binding. Lysine 405 bears the N6-(pyridoxal phosphate)lysine mark. Arginine 567 provides a ligand contact to 4-aminobutanoate.

Belongs to the group II decarboxylase family. As to quaternary structure, homodimer. The cofactor is pyridoxal 5'-phosphate.

The catalysed reaction is L-glutamate + H(+) = 4-aminobutanoate + CO2. In terms of biological role, catalyzes the synthesis of the inhibitory neurotransmitter gamma-aminobutyric acid (GABA) with pyridoxal 5'-phosphate as cofactor. The chain is Glutamate decarboxylase 1 (GAD1) from Canis lupus familiaris (Dog).